Reading from the N-terminus, the 118-residue chain is Protein TusC (118 aa).

It belongs to the DsrF/TusC family. In terms of assembly, heterohexamer, formed by a dimer of trimers. The hexameric TusBCD complex contains 2 copies each of TusB, TusC and TusD. The TusBCD complex interacts with TusE.

The protein resides in the cytoplasm. Functionally, part of a sulfur-relay system required for 2-thiolation of 5-methylaminomethyl-2-thiouridine (mnm(5)s(2)U) at tRNA wobble positions. The sequence is that of Protein TusC from Salmonella arizonae (strain ATCC BAA-731 / CDC346-86 / RSK2980).